The primary structure comprises 359 residues: Type-1 angiotensin II receptor (359 aa).

Residues 1-25 (MILNSSTEDGIKRIQDDCPKAGRHN) are Extracellular-facing. Asn-4 carries N-linked (GlcNAc...) (complex) asparagine glycosylation. Angiotensin II contacts are provided by Gln-15 and Asp-17. Cystine bridges form between Cys-18–Cys-274 and Cys-101–Cys-180. Residues 26 to 55 (YIFVMIPTLYSIIFVVGIFGNSLVVIVIYF) traverse the membrane as a helical segment. At 56–61 (YMKLKT) the chain is on the cytoplasmic side. The helical transmembrane segment at 62–89 (VASVFLLNLALADLCFLLTLPLWAVYTA) threads the bilayer. The Extracellular portion of the chain corresponds to 90 to 98 (MEYRWPFGN). The helical transmembrane segment at 99 to 125 (YLCKIASASVSFNLYASVFLLTCLSID) threads the bilayer. The Cytoplasmic portion of the chain corresponds to 126–141 (RYLAIVHPMKSRLRRT). A helical membrane pass occupies residues 142-165 (MLVAKVTCIIIWLLAGLASLPAII). The Extracellular segment spans residues 166–190 (HRNVFFIENTNITVCAFHYESQNST). Arg-167 contributes to the angiotensin II binding site. A glycan (N-linked (GlcNAc...) asparagine) is linked at Asn-176. Angiotensin II-binding residues include Phe-182, His-183, and Tyr-184. Asn-188 is a glycosylation site (N-linked (GlcNAc...) asparagine). The chain crosses the membrane as a helical span at residues 191 to 216 (LPIGLGLTKNILGFLFPFLIILTSYT). Angiotensin II is bound at residue Lys-199. Over 217-239 (LIWKALKKAYEIQKNKPRNDDIF) the chain is Cytoplasmic. The chain crosses the membrane as a helical span at residues 240–268 (KIIMAIVLFFFFSWIPHQIFTFLDVLIQL). At 269-278 (GIIRDCRIAD) the chain is on the extracellular side. Residues 279–304 (IVDTAMPITICIAYFNNCLNPLFYGF) traverse the membrane as a helical segment. The Cytoplasmic portion of the chain corresponds to 305 to 359 (LGKKFKRYFLQLLKYIPPKAKSHSNLSTKMSTLSYRPSDNVSSSTKKPAPCFEVE). A compositionally biased stretch (polar residues) spans 335–350 (STLSYRPSDNVSSSTK). Residues 335–359 (STLSYRPSDNVSSSTKKPAPCFEVE) are disordered. The S-palmitoyl cysteine moiety is linked to residue Cys-355.

The protein belongs to the G-protein coupled receptor 1 family. In terms of assembly, interacts with MAS1. Interacts with ARRB1. Interacts with FLNA (via filamin repeat 21); increases PKA-mediated phosphorylation of FLNA. In terms of processing, C-terminal Ser or Thr residues may be phosphorylated. As to expression, liver, lung, adrenal and adrenocortical adenomas.

The protein localises to the cell membrane. Its activity is regulated as follows. Strongly inhibited by anti-hypertensive drugs losartan, candesartan, valsartan, irbesartan, telmisartan, eprosartan, olmesartan and azilsartan, most of which share a common biphenyl-tetrazole scaffold. In terms of biological role, receptor for angiotensin II, a vasoconstricting peptide, which acts as a key regulator of blood pressure and sodium retention by the kidney. The activated receptor in turn couples to G-alpha proteins G(q) (GNAQ, GNA11, GNA14 or GNA15) and thus activates phospholipase C and increases the cytosolic Ca(2+) concentrations, which in turn triggers cellular responses such as stimulation of protein kinase C. Functionally, (Microbial infection) During SARS coronavirus-2/SARS-CoV-2 infection, it is able to recognize and internalize the complex formed by secreted ACE2 and SARS-CoV-2 spike protein through DNM2/dynamin 2-dependent endocytosis. This Homo sapiens (Human) protein is Type-1 angiotensin II receptor.